A 555-amino-acid polypeptide reads, in one-letter code: Carboxysome assembly protein CcmM (555 aa).

The segment at 1–209 (MAVRSTAAPP…CIAPLRNDQV (209 aa)) is has carbonic anhydrase (CA) activity. Residue Glu56 is the Proton donor/acceptor of the active site. Zn(2+)-binding residues include His75, His102, and His107. A disulfide bridge links Cys194 with Cys200. The segment at 223–315 (SSEVASNSLG…RVLETIIQRP (93 aa)) is rbcS-like repeat 1, SSUL1. Disordered regions lie at residues 323–351 (TSFK…SNGA) and 441–464 (NGQV…SGTA). Composition is skewed to low complexity over residues 330-351 (SNTN…SNGA) and 445-464 (APSS…SGTA). The segment at 347 to 440 (YSNGATSGKV…RVLESIIQRP (94 aa)) is rbcS-like repeat 2, SSUL2. A rbcS-like repeat 3, SSUL3 region spans residues 460 to 555 (SSGTATATAT…RVLETIIQRP (96 aa)).

This sequence belongs to the gamma-class carbonic anhydrase family. In terms of assembly, probable homotrimer; zinc is bound between adjacent monomers. Full length protein (M58) interacts with CcmN. The C-terminal RbcS-like domains (SSUL) bind to holo-RuBisCO, as does the M35 short form. Zn(2+) serves as cofactor. Post-translationally, the first amino acid of the short form (equivalent to Val-226) is not seen in Edman degradation, while Ser-230 may be post-translationally modified. Migrates in gels as 2 about equal forms of about 60 and 35 kDa (called M58 and M35). They are probably the result of alternative translation initiation.

The protein resides in the carboxysome. Its subcellular location is the cytoplasm. It catalyses the reaction hydrogencarbonate + H(+) = CO2 + H2O. Its activity is regulated as follows. Carbonic anhydrase (CA) activity is probably under redox control to remain inactive in the cytoplasm. Carbonic anhydrase (CA) activity of full-length protein and N-terminal fragment is inhibited by ethoxyzolamide. N-terminal fragment CA activity is activated under oxidizing conditions and inhibited under reducing conditions. Functionally, functions as a scaffold protein for the assembly of beta-carboxysomes, initiates carboxysome assembly by coalescing RuBisCO (ribulose bisphosphate carboxylase, rbcL-rbcS). Produced as a full-length (M58) and a short form (M35), possibly by alternative translation initiation; probably both forms are required for correct carboxysome assembly and growth. In this strain both forms are equally abundant. Its function is as follows. A moderately active carbonic anhydrase that catalyzes the reversible hydration of carbon dioxide. Essential to photosynthetic carbon dioxide fixation, supplies CO(2) to ribulose bisphosphate carboxylase (RuBisCO) in the carboxysome. Also hydrolyzes COS. Beta-carboxysome assembly initiates when soluble RuBisCO is condensed into a liquid matrix in a pre-carboxysome by the RbcS-like domains of probably both forms of CcmM. CcmN interacts with the N-terminus of full length CcmM, and then recruits the shell proteins (CcmK) via CcmN's encapsulation peptide. Shell formation requires both CcmK proteins and CcmO. CcmL caps the otherwise elongated carboxysome. Once fully encapsulated carboxysomes are formed, they migrate within the cell probably via interactions with the cytoskeleton. The chain is Carboxysome assembly protein CcmM from Nostoc sp. (strain PCC 7120 / SAG 25.82 / UTEX 2576).